We begin with the raw amino-acid sequence, 172 residues long: Large ribosomal subunit protein uL10 (172 aa).

It belongs to the universal ribosomal protein uL10 family. Part of the ribosomal stalk of the 50S ribosomal subunit. The N-terminus interacts with L11 and the large rRNA to form the base of the stalk. The C-terminus forms an elongated spine to which L12 dimers bind in a sequential fashion forming a multimeric L10(L12)X complex.

In terms of biological role, forms part of the ribosomal stalk, playing a central role in the interaction of the ribosome with GTP-bound translation factors. The sequence is that of Large ribosomal subunit protein uL10 (rplJ) from Chlamydia trachomatis serovar D (strain ATCC VR-885 / DSM 19411 / UW-3/Cx).